Reading from the N-terminus, the 107-residue chain is Nucleoid-associated protein Pnec_0645 (107 aa).

Belongs to the YbaB/EbfC family. As to quaternary structure, homodimer.

Its subcellular location is the cytoplasm. It is found in the nucleoid. Its function is as follows. Binds to DNA and alters its conformation. May be involved in regulation of gene expression, nucleoid organization and DNA protection. The polypeptide is Nucleoid-associated protein Pnec_0645 (Polynucleobacter necessarius subsp. necessarius (strain STIR1)).